The chain runs to 948 residues: Valine--tRNA ligase (948 aa).

The short motif at 40 to 50 is the 'HIGH' region element; sequence PNVTGSLHMGH. The 'KMSKS' region motif lies at 551-555; the sequence is KMSKS. Position 554 (Lys554) interacts with ATP. A coiled-coil region spans residues 879–945; the sequence is LIDKGAELAR…GKLAEQHARI (67 aa).

It belongs to the class-I aminoacyl-tRNA synthetase family. ValS type 1 subfamily. As to quaternary structure, monomer.

The protein localises to the cytoplasm. The catalysed reaction is tRNA(Val) + L-valine + ATP = L-valyl-tRNA(Val) + AMP + diphosphate. Its function is as follows. Catalyzes the attachment of valine to tRNA(Val). As ValRS can inadvertently accommodate and process structurally similar amino acids such as threonine, to avoid such errors, it has a 'posttransfer' editing activity that hydrolyzes mischarged Thr-tRNA(Val) in a tRNA-dependent manner. This is Valine--tRNA ligase from Pseudomonas savastanoi pv. phaseolicola (strain 1448A / Race 6) (Pseudomonas syringae pv. phaseolicola (strain 1448A / Race 6)).